The chain runs to 83 residues: Parvalbumin beta 3 (83 aa).

EF-hand domains lie at 13-48 and 52-83; these read KSND…FSAG and LTAG…LVKA. Ca(2+)-binding residues include D26, D28, S30, F32, E34, E37, D65, D67, D69, M71, and E76.

Belongs to the parvalbumin family.

Its function is as follows. In muscle, parvalbumin is thought to be involved in relaxation after contraction. It binds two calcium ions. This is Parvalbumin beta 3 from Macruronus novaezelandiae (Blue grenadier).